The chain runs to 160 residues: Ribosomal RNA large subunit methyltransferase H (160 aa).

S-adenosyl-L-methionine contacts are provided by residues Leu76, Gly108, and 127–132 (FGFMTW).

The protein belongs to the RNA methyltransferase RlmH family. In terms of assembly, homodimer.

It is found in the cytoplasm. It carries out the reaction pseudouridine(1915) in 23S rRNA + S-adenosyl-L-methionine = N(3)-methylpseudouridine(1915) in 23S rRNA + S-adenosyl-L-homocysteine + H(+). In terms of biological role, specifically methylates the pseudouridine at position 1915 (m3Psi1915) in 23S rRNA. This chain is Ribosomal RNA large subunit methyltransferase H, found in Bartonella tribocorum (strain CIP 105476 / IBS 506).